A 200-amino-acid polypeptide reads, in one-letter code: uncharacterized protein (200 aa).

An N-terminal signal peptide occupies residues 1–24 (MSRVFSCVLRACVCAGLCCWVCMG). Residues 124-200 (GGRDLPMHGA…GEGGDNGEGE (77 aa)) form a disordered region. Over residues 184 to 200 (LGDEGETGEGGDNGEGE) the composition is skewed to acidic residues.

This is an uncharacterized protein from Homo sapiens (Human).